We begin with the raw amino-acid sequence, 421 residues long: MEKMHITNQEHDAFVKSHPNGDLLQLTKWAETKKLTGWYARRIAVGRDGEIQGVAQLLFKKVPKLPYTLCYISRGFVVDYSNKEALNALLDSAKEIAKAEKAYAIKIDPDVEVDKGTDALQNLKALGFKHKGFKEGLSKDYIQPRMTMITPIDKNDDELLNSYERRNRSKVRLALKRGTTVERSDREGLKTFAELMKITGERDGFLTRDISYFENIYDALHEDGDAELFLVKLDPKENIAKVNQELNELHAEIAKWQQKMETSEKQAKKAQNMINDAQNKIAKNEDLKRDLEALEKEHPEGIYLSGALLMFAGSKSYYLYGASSNEFRDFLPNHHMQYTMMKYAREHGATTYDFGGTDNDPDKDSEHYGLWAFKKVWGTYLSEKIGEFDYVLNQPLYQLIEQVKPRLTKAKIKISRKLKRK.

The protein belongs to the FemABX family. In terms of assembly, monomer.

The protein localises to the cytoplasm. The enzyme catalyses beta-D-GlcNAc-(1-&gt;4)-Mur2Ac(oyl-L-Ala-D-isoglutaminyl-L-Lys-D-Ala-D-Ala)-di-trans,octa-cis-undecaprenyl diphosphate + glycyl-tRNA(Gly) = beta-D-GlcNAc-(1-&gt;4)-Mur2Ac(oyl-L-Ala-D-isoglutaminyl-L-Lys-(N(6)-Gly)-D-Ala-D-Ala)-di-trans,octa-cis-undecaprenyl diphosphate + tRNA(Gly) + H(+). In terms of biological role, catalyzes the incorporation of the first glycine of the pentaglycine interpeptide bridge, which is characteristic of the S.aureus peptidoglycan. This glycine is added to the epsilon-amino group of the L-lysine of the membrane-bound lipid II intermediate (GlcNAc-(beta-1,4)-N-acetylmuramic acid(-L-Ala-D-iGln-L-Lys-D-Ala-D-Ala)-pyrophosphoryl-undecaprenol), using glycyl-tRNA(Gly) as donor, in a ribosome-independent mechanism. The protein is Lipid II:glycine glycyltransferase (femX) of Staphylococcus aureus (strain bovine RF122 / ET3-1).